The chain runs to 298 residues: ATP synthase gamma chain (298 aa).

This sequence belongs to the ATPase gamma chain family. As to quaternary structure, F-type ATPases have 2 components, CF(1) - the catalytic core - and CF(0) - the membrane proton channel. CF(1) has five subunits: alpha(3), beta(3), gamma(1), delta(1), epsilon(1). CF(0) has three main subunits: a, b and c.

The protein resides in the cell membrane. In terms of biological role, produces ATP from ADP in the presence of a proton gradient across the membrane. The gamma chain is believed to be important in regulating ATPase activity and the flow of protons through the CF(0) complex. This Parafrankia sp. (strain EAN1pec) protein is ATP synthase gamma chain.